Reading from the N-terminus, the 142-residue chain is Transcriptional regulator MraZ (142 aa).

2 SpoVT-AbrB domains span residues 5-51 (ASAL…PRPE) and 77-120 (AMDV…DSQT).

It belongs to the MraZ family. As to quaternary structure, forms oligomers.

Its subcellular location is the cytoplasm. It localises to the nucleoid. In Burkholderia cenocepacia (strain ATCC BAA-245 / DSM 16553 / LMG 16656 / NCTC 13227 / J2315 / CF5610) (Burkholderia cepacia (strain J2315)), this protein is Transcriptional regulator MraZ.